Consider the following 357-residue polypeptide: Peptide chain release factor 1 (357 aa).

Residue glutamine 236 is modified to N5-methylglutamine.

The protein belongs to the prokaryotic/mitochondrial release factor family. In terms of processing, methylated by PrmC. Methylation increases the termination efficiency of RF1.

It is found in the cytoplasm. Peptide chain release factor 1 directs the termination of translation in response to the peptide chain termination codons UAG and UAA. This chain is Peptide chain release factor 1, found in Mycolicibacterium vanbaalenii (strain DSM 7251 / JCM 13017 / BCRC 16820 / KCTC 9966 / NRRL B-24157 / PYR-1) (Mycobacterium vanbaalenii).